The primary structure comprises 266 residues: Glucose 1-dehydrogenase (266 aa).

15–39 (LVTGASQGIGEATALRFAEEGAQVA) provides a ligand contact to NADP(+). Ser149 provides a ligand contact to substrate. Tyr162 (proton acceptor) is an active-site residue.

The protein belongs to the short-chain dehydrogenases/reductases (SDR) family. As to quaternary structure, homotetramer or homooctamer.

It carries out the reaction D-glucose + NADP(+) = D-glucono-1,5-lactone + NADPH + H(+). In terms of biological role, oxidizes both D-glucose and D-mannose, but is 15 times more catalytically efficient with mannose. Strictly dependent on NADP. The chain is Glucose 1-dehydrogenase from Gluconobacter oxydans (strain 621H) (Gluconobacter suboxydans).